The sequence spans 49 residues: Small, acid-soluble spore protein O (49 aa).

Residues 1-49 (MGKRKANHTISGMNVASAQGQGTGYNEEFANEPLTPAERQNNKKRKKNQ) form a disordered region. Residues 8 to 20 (HTISGMNVASAQG) show a composition bias toward polar residues.

It belongs to the SspO family.

The protein localises to the spore core. In Bacillus cereus (strain G9842), this protein is Small, acid-soluble spore protein O.